The following is a 218-amino-acid chain: MHSSTHDDLVILGGTFDPIHYGHLRAVEEVRQALAIAQAMLIPAGHPPHRKSPWADARHRLAMTRIAVAHHPQFTVSSWEVEREGPSYTVDTLTALRQQRPDAVLAMVIGMDAFLRFDTWHHWQHILDLTHLVVTGRPGWPAAELPEALRQALYQRRCEDVDALRQTPAGCILFHTVTALEISASNIRSLLAGHQSPRFLLPDEVLDYIDAEGLYQSP.

The protein belongs to the NadD family.

The enzyme catalyses nicotinate beta-D-ribonucleotide + ATP + H(+) = deamido-NAD(+) + diphosphate. Its pathway is cofactor biosynthesis; NAD(+) biosynthesis; deamido-NAD(+) from nicotinate D-ribonucleotide: step 1/1. Its function is as follows. Catalyzes the reversible adenylation of nicotinate mononucleotide (NaMN) to nicotinic acid adenine dinucleotide (NaAD). The chain is Probable nicotinate-nucleotide adenylyltransferase from Acidithiobacillus ferrooxidans (strain ATCC 23270 / DSM 14882 / CIP 104768 / NCIMB 8455) (Ferrobacillus ferrooxidans (strain ATCC 23270)).